Here is a 376-residue protein sequence, read N- to C-terminus: c-di-GMP synthase (376 aa).

The protein belongs to the CD-NTase family. G05 subfamily.

It carries out the reaction 2 GTP = 3',3'-c-di-GMP + 2 diphosphate. Its function is as follows. Cyclic nucleotide synthase (second messenger synthase) of a CBASS antivirus system. CBASS (cyclic oligonucleotide-based antiphage signaling system) provides immunity against bacteriophage. The CD-NTase protein synthesizes cyclic nucleotides in response to infection; these serve as specific second messenger signals. The signals activate a diverse range of effectors, leading to bacterial cell death and thus abortive phage infection. A type I-D CBASS(GG) system. Cyclic dinucleotide synthase that catalyzes the synthesis of c-di-GMP, has no activity with other NTP substrates. In Roseivirga ehrenbergii (strain DSM 102268 / JCM 13514 / KCTC 12282 / NCIMB 14502 / KMM 6017), this protein is c-di-GMP synthase.